We begin with the raw amino-acid sequence, 428 residues long: Aerobic C4-dicarboxylate transport protein (428 aa).

9 consecutive transmembrane segments (helical) span residues 5–27, 47–64, 77–99, 141–163, 184–206, 216–238, 289–311, 326–348, and 353–375; these read LFKSLYFQVLTAIAIGILLGHYY, MIIAPVIFCTVVTGIAGM, ALLYFEIVSTIALINGLIIVNVV, VIGAFASGNILQVLLFAVLFGFA, VIFGIINMIMRLAPIGAFGAMAF, LVQLGQLIICFYITCILFVVVVL, VVGLVIPTGYSFNLDGTSIYLTM, IFHQITLLVVLLLSSKGAAGVTG, and VLAATISAVGHLPVAGLALILGI.

It belongs to the dicarboxylate/amino acid:cation symporter (DAACS) (TC 2.A.23) family.

It is found in the cell inner membrane. In terms of biological role, responsible for the transport of dicarboxylates such as succinate, fumarate, and malate from the periplasm across the membrane. This Salmonella typhi protein is Aerobic C4-dicarboxylate transport protein.